Here is a 466-residue protein sequence, read N- to C-terminus: CCA-adding enzyme (466 aa).

Residues Ser55 and Arg58 each coordinate ATP. 2 residues coordinate CTP: Ser55 and Arg58. Mg(2+) contacts are provided by Asp67, Asp69, and Asp118. 3 residues coordinate ATP: His141, Lys161, and Tyr170. 3 residues coordinate CTP: His141, Lys161, and Tyr170.

This sequence belongs to the tRNA nucleotidyltransferase/poly(A) polymerase family. Archaeal CCA-adding enzyme subfamily. In terms of assembly, homodimer. Mg(2+) is required as a cofactor.

It carries out the reaction a tRNA precursor + 2 CTP + ATP = a tRNA with a 3' CCA end + 3 diphosphate. It catalyses the reaction a tRNA with a 3' CCA end + 2 CTP + ATP = a tRNA with a 3' CCACCA end + 3 diphosphate. Functionally, catalyzes the addition and repair of the essential 3'-terminal CCA sequence in tRNAs without using a nucleic acid template. Adds these three nucleotides in the order of C, C, and A to the tRNA nucleotide-73, using CTP and ATP as substrates and producing inorganic pyrophosphate. tRNA 3'-terminal CCA addition is required both for tRNA processing and repair. Also involved in tRNA surveillance by mediating tandem CCA addition to generate a CCACCA at the 3' terminus of unstable tRNAs. While stable tRNAs receive only 3'-terminal CCA, unstable tRNAs are marked with CCACCA and rapidly degraded. The chain is CCA-adding enzyme from Haloarcula marismortui (strain ATCC 43049 / DSM 3752 / JCM 8966 / VKM B-1809) (Halobacterium marismortui).